The primary structure comprises 237 residues: tRNA-splicing endonuclease subunit Sen2-1 (237 aa).

Active-site residues include Y148, H156, and K190.

The protein belongs to the tRNA-intron endonuclease family. As to quaternary structure, tRNA splicing endonuclease is a heterotetramer composed of SEN2, SEN15, SEN34/LENG5 and SEN54.

The protein localises to the nucleus. It catalyses the reaction pretRNA = a 3'-half-tRNA molecule with a 5'-OH end + a 5'-half-tRNA molecule with a 2',3'-cyclic phosphate end + an intron with a 2',3'-cyclic phosphate and a 5'-hydroxyl terminus.. Constitutes one of the two catalytic subunit of the tRNA-splicing endonuclease complex, a complex responsible for identification and cleavage of the splice sites in pre-tRNA. It cleaves pre-tRNA at the 5'- and 3'-splice sites to release the intron. The products are an intron and two tRNA half-molecules bearing 2',3'-cyclic phosphate and 5'-OH termini. There are no conserved sequences at the splice sites, but the intron is invariably located at the same site in the gene, placing the splice sites an invariant distance from the constant structural features of the tRNA body. Probably carries the active site for 5'-splice site cleavage. This chain is tRNA-splicing endonuclease subunit Sen2-1 (SEN1), found in Arabidopsis thaliana (Mouse-ear cress).